Reading from the N-terminus, the 672-residue chain is MTYENNTHQQNGAGTADIESRFANMSVQNGAAGGAPRKAYVPPHLRSQQQPASLNSSAASFSPRAPAAFNGNGNSNGNGNGPAAPAAPAAFQSFNRGAPRGGAGGWDAPSSGGYGGARNGGGYGGGARNDGFGQWKDGKHVPGPHNPRLQKELFGEEGDGLHQSMGINFDKYGDIPVEATGRDVPEPVTTFTSPPIDAHLLENIKLARYTNPTPVQKYSIPIIKLGRDLMGCAQTGSGKTGGFLFPILSALFTHGPPPPSAAEMAQGGYNRRKAYPSTLILAPTRELVSQIHDEARKFTYRSWVKPAVVYGGADIVTQLRQIERGCDLLSATPGRLVDLMERGRISLSNVRFLVLDEADRMLDMGFEPQIRRIVEGEDMPGVMDRQTLMFSATFPRDIQLLAKDFLKEYVFLSVGRVGSTSENITQKIEYVEDDDKRSVLLDVLASMPSGGLTLIFVETKRMADMLSDFLLRSKIGATSIHGDRTQRERERALELFRSGKTPIMVATAVAARGLDIPNVTHVVNYDLPSDVDDYVHRIGRTGRAGNVGHATAFFNRGNKNIVRDLIELLKEANQEVPQWLEAVARESMFGAGGGSRGGRGRGRGRGGASSFGNRDARTMNGPSSGGGRGFGGGYGGGMGGGLGGSYGAGAAAYGGPPPASNGGSYGGNSSWW.

Disordered stretches follow at residues 28–88 (QNGA…PAAP) and 125–149 (GGARNDGFGQWKDGKHVPGPHNPRL). Polar residues predominate over residues 46–55 (RSQQQPASLN). A compositionally biased stretch (low complexity) spans 56–73 (SSAASFSPRAPAAFNGNG). The short motif at 189–217 (TTFTSPPIDAHLLENIKLARYTNPTPVQK) is the Q motif element. One can recognise a Helicase ATP-binding domain in the interval 220–412 (IPIIKLGRDL…KDFLKEYVFL (193 aa)). 233–240 (AQTGSGKT) provides a ligand contact to ATP. Residues 356 to 359 (DEAD) carry the DEAD box motif. The 162-residue stretch at 423–584 (NITQKIEYVE…EVPQWLEAVA (162 aa)) folds into the Helicase C-terminal domain. A disordered region spans residues 590–627 (GAGGGSRGGRGRGRGRGGASSFGNRDARTMNGPSSGGG).

The protein belongs to the DEAD box helicase family. DDX3/DED1 subfamily.

Its subcellular location is the cytoplasm. The enzyme catalyses ATP + H2O = ADP + phosphate + H(+). Its function is as follows. ATP-binding RNA helicase involved in translation initiation. Remodels RNA in response to ADP and ATP concentrations by facilitating disruption, but also formation of RNA duplexes. In Mycosarcoma maydis (Corn smut fungus), this protein is ATP-dependent RNA helicase DED1 (DED1).